Here is a 246-residue protein sequence, read N- to C-terminus: Probable phosphatase Ssed_2939 (246 aa).

H8, H10, H16, H41, E74, H102, H132, D193, and H195 together coordinate Zn(2+).

Belongs to the PHP family. It depends on Zn(2+) as a cofactor.

This chain is Probable phosphatase Ssed_2939, found in Shewanella sediminis (strain HAW-EB3).